The following is a 185-amino-acid chain: Ribosome-recycling factor (185 aa).

Belongs to the RRF family.

The protein localises to the cytoplasm. Responsible for the release of ribosomes from messenger RNA at the termination of protein biosynthesis. May increase the efficiency of translation by recycling ribosomes from one round of translation to another. In Klebsiella pneumoniae (strain 342), this protein is Ribosome-recycling factor.